The chain runs to 795 residues: ATP-dependent RNA helicase DHX15 (795 aa).

The tract at residues 1 to 111 (MSKRHRLDLG…HTGHTGHTSL (111 aa)) is disordered. S15 carries the phosphoserine modification. Over residues 20-62 (AGTDGKDRERDRDREDRSKDRDRERDRGDREREREKEKEKELR) the composition is skewed to basic and acidic residues. Over residues 79–110 (ASHSAHSTHSAHSTHSTHSAHSTHTGHTGHTS) the composition is skewed to low complexity. The Helicase ATP-binding domain maps to 147–313 (TDILVRHQSF…FDNCPLLTIP (167 aa)). Position 160–167 (160–167 (GETGSGKT)) interacts with ATP. A DEAH box motif is present at residues 260–263 (DEAH). Positions 338–518 (TVIQIHMCEE…SVVLQLKKLG (181 aa)) constitute a Helicase C-terminal domain. K488 carries the N6-acetyllysine modification. A Glycyl lysine isopeptide (Lys-Gly) (interchain with G-Cter in SUMO2) cross-link involves residue K786.

It belongs to the DEAD box helicase family. DEAH subfamily. DDX15/PRP43 sub-subfamily. As to quaternary structure, component of the U11/U12 snRNPs that are part of the U12-type spliceosome. Identified in the Intron Large spliceosome complex (IL, also named intron lariat spliceosome), a post-mRNA release spliceosomal complex containing the excised intron, U2, U5 and U6 snRNPs, and splicing factors; the association may be transient. The IL complex exists in two distinct conformations, one with the DHX15 (ILS2) and one without (ILS1). Interacts with TFIP11 (via G-patch domain); indicative for a recruitment to the IL complex. Interacts with SSB/La. Interacts with GPATCH2 (via G-patch domain); promoting the RNA helicase activity. Interacts with NKRF (via G-patch domain); promoting the RNA helicase activity. Interacts with NLRP6. Ubiquitous.

The protein localises to the nucleus. It is found in the nucleolus. It catalyses the reaction ATP + H2O = ADP + phosphate + H(+). ATPase activity is enhanced upon binding to G-patch domain-containing proteins. G-patch domain-containing proteins act like a brace that tethers mobile sections of DHX15 together, stabilizing a functional conformation with high RNA affinity, thereby promoting the ATPase activity. Functionally, RNA helicase involved in mRNA processing and antiviral innate immunity. Pre-mRNA processing factor involved in disassembly of spliceosomes after the release of mature mRNA. In cooperation with TFIP11 seem to be involved in the transition of the U2, U5 and U6 snRNP-containing IL complex to the snRNP-free IS complex leading to efficient debranching and turnover of excised introns. Plays a key role in antiviral innate immunity by promoting both MAVS-dependent signaling and NLRP6 inflammasome. Acts as an RNA virus sensor: recognizes and binds viral double stranded RNA (dsRNA) and activates the MAVS-dependent signaling to produce interferon-beta and interferon lambda-3 (IFNL3). Involved in intestinal antiviral innate immunity together with NLRP6: recognizes and binds viral dsRNA and promotes activation of the NLRP6 inflammasome in intestinal epithelial cells to restrict infection by enteric viruses. The NLRP6 inflammasome acts by promoting maturation and secretion of IL18 in the extracellular milieu. Also involved in antibacterial innate immunity by promoting Wnt-induced antimicrobial protein expression in Paneth cells. This Mus musculus (Mouse) protein is ATP-dependent RNA helicase DHX15.